The chain runs to 295 residues: Glutamyl-Q tRNA(Asp) synthetase (295 aa).

L-glutamate-binding positions include 5 to 9 (RFAPS) and glutamate 41. Residues 8-18 (PSPTGLLHIGS) carry the 'HIGH' region motif. Zn(2+)-binding residues include cysteine 97, cysteine 99, tyrosine 117, and cysteine 121. L-glutamate is bound by residues tyrosine 178 and arginine 196. The 'KMSKS' region motif lies at 234–238 (KWSKQ). ATP is bound at residue lysine 237.

This sequence belongs to the class-I aminoacyl-tRNA synthetase family. GluQ subfamily. It depends on Zn(2+) as a cofactor.

Functionally, catalyzes the tRNA-independent activation of glutamate in presence of ATP and the subsequent transfer of glutamate onto a tRNA(Asp). Glutamate is transferred on the 2-amino-5-(4,5-dihydroxy-2-cyclopenten-1-yl) moiety of the queuosine in the wobble position of the QUC anticodon. The polypeptide is Glutamyl-Q tRNA(Asp) synthetase (Neisseria meningitidis serogroup A / serotype 4A (strain DSM 15465 / Z2491)).